Here is a 369-residue protein sequence, read N- to C-terminus: Chorismate synthase (369 aa).

2 residues coordinate NADP(+): Arg-48 and Arg-54. FMN contacts are provided by residues 125–127 (RSS), 238–239 (NA), Gly-278, 293–297 (KPTSS), and Arg-319.

It belongs to the chorismate synthase family. Homotetramer. Requires FMNH2 as cofactor.

The enzyme catalyses 5-O-(1-carboxyvinyl)-3-phosphoshikimate = chorismate + phosphate. The protein operates within metabolic intermediate biosynthesis; chorismate biosynthesis; chorismate from D-erythrose 4-phosphate and phosphoenolpyruvate: step 7/7. In terms of biological role, catalyzes the anti-1,4-elimination of the C-3 phosphate and the C-6 proR hydrogen from 5-enolpyruvylshikimate-3-phosphate (EPSP) to yield chorismate, which is the branch point compound that serves as the starting substrate for the three terminal pathways of aromatic amino acid biosynthesis. This reaction introduces a second double bond into the aromatic ring system. The polypeptide is Chorismate synthase (Burkholderia mallei (strain ATCC 23344)).